Here is a 301-residue protein sequence, read N- to C-terminus: Tetrahydromethanopterin S-methyltransferase subunit E (301 aa).

The next 5 membrane-spanning stretches (helical) occupy residues 85–105 (VIFAIAIGALVASAVHGTYCI), 130–150 (HTPVMMGYAFITTFCILVVSY), 151–171 (IMVAVLAHPFPLTLLAFIWGI), 232–252 (PVTGLAFGMTVFLSGWVTAVF), and 258–278 (LTMGWLSVAAGVILVLLLIIW).

Belongs to the MtrE family. In terms of assembly, the complex is composed of 8 subunits; MtrA, MtrB, MtrC, MtrD, MtrE, MtrF, MtrG and MtrH.

The protein localises to the cell membrane. The enzyme catalyses 5-methyl-5,6,7,8-tetrahydromethanopterin + coenzyme M + 2 Na(+)(in) = 5,6,7,8-tetrahydromethanopterin + methyl-coenzyme M + 2 Na(+)(out). In terms of biological role, part of a complex that catalyzes the formation of methyl-coenzyme M and tetrahydromethanopterin from coenzyme M and methyl-tetrahydromethanopterin. This is an energy-conserving, sodium-ion translocating step. The polypeptide is Tetrahydromethanopterin S-methyltransferase subunit E (Methanococcoides burtonii (strain DSM 6242 / NBRC 107633 / OCM 468 / ACE-M)).